A 1051-amino-acid chain; its full sequence is Eukaryotic translation initiation factor 3 subunit A (1051 aa).

Residues L92–A121 are a coiled coil. The region spanning M339–F523 is the PCI domain. A coiled-coil region spans residues R608–K905. Composition is skewed to basic and acidic residues over residues A617–R632, E642–Q664, K794–R901, and A916–A926. Disordered regions lie at residues A617–Q664 and K794–Q1051. Composition is skewed to low complexity over residues K948–E961 and S1010–P1039.

The protein belongs to the eIF-3 subunit A family. In terms of assembly, component of the eukaryotic translation initiation factor 3 (eIF-3) complex.

The protein resides in the cytoplasm. RNA-binding component of the eukaryotic translation initiation factor 3 (eIF-3) complex, which is involved in protein synthesis of a specialized repertoire of mRNAs and, together with other initiation factors, stimulates binding of mRNA and methionyl-tRNAi to the 40S ribosome. The eIF-3 complex specifically targets and initiates translation of a subset of mRNAs involved in cell proliferation. The protein is Eukaryotic translation initiation factor 3 subunit A (tif32) of Aspergillus fumigatus (strain CBS 144.89 / FGSC A1163 / CEA10) (Neosartorya fumigata).